Consider the following 90-residue polypeptide: UPF0237 protein MK1213 (90 aa).

The 75-residue stretch at 5–79 (VVTVIGADRP…EELGVDVIVQ (75 aa)) folds into the ACT domain.

Belongs to the UPF0237 family.

The protein is UPF0237 protein MK1213 of Methanopyrus kandleri (strain AV19 / DSM 6324 / JCM 9639 / NBRC 100938).